The sequence spans 337 residues: Adenosine deaminase-like protein (337 aa).

The Zn(2+) site is built by histidine 14 and histidine 16. Residues histidine 16, asparagine 18, histidine 66, 98-101 (TTPK), and glycine 171 each bind N(6)-methyl-AMP. Residue histidine 198 coordinates Zn(2+). Residues glutamate 201, aspartate 276, and aspartate 277 each coordinate N(6)-methyl-AMP. Glutamate 201 functions as the Proton donor in the catalytic mechanism. A Zn(2+)-binding site is contributed by aspartate 276.

The protein belongs to the metallo-dependent hydrolases superfamily. Adenosine and AMP deaminases family. As to quaternary structure, monomer. Zn(2+) is required as a cofactor.

The catalysed reaction is N(6)-methyl-AMP + H2O + H(+) = IMP + methylamine. Functionally, catalyzes the hydrolysis of the free cytosolic methylated adenosine nucleotide N(6)-methyl-AMP (N6-mAMP) to produce inositol monophosphate (IMP) and methylamine. Is required for the catabolism of cytosolic N6-mAMP, which is derived from the degradation of mRNA containing N6-methylated adenine (m6A). In Drosophila melanogaster (Fruit fly), this protein is Adenosine deaminase-like protein (Ada).